The primary structure comprises 457 residues: Adenylosuccinate synthetase (457 aa).

GTP is bound by residues 45–51 and 73–75; these read GDEGKGK and GHT. Residue D46 is the Proton acceptor of the active site. 2 residues coordinate Mg(2+): D46 and G73. IMP-binding positions include 46–49, 71–74, T163, R177, N255, T270, and R334; these read DEGK and NAGH. H74 serves as the catalytic Proton donor. 330–336 contacts substrate; sequence VTTKRVR. GTP-binding positions include R336, 362–364, and 444–446; these read KLD and GVG.

This sequence belongs to the adenylosuccinate synthetase family. Homodimer. Requires Mg(2+) as cofactor.

The protein localises to the cytoplasm. It carries out the reaction IMP + L-aspartate + GTP = N(6)-(1,2-dicarboxyethyl)-AMP + GDP + phosphate + 2 H(+). Its pathway is purine metabolism; AMP biosynthesis via de novo pathway; AMP from IMP: step 1/2. Plays an important role in the de novo pathway and in the salvage pathway of purine nucleotide biosynthesis. Catalyzes the first committed step in the biosynthesis of AMP from IMP. The polypeptide is Adenylosuccinate synthetase (Aedes aegypti (Yellowfever mosquito)).